Consider the following 266-residue polypeptide: GTP cyclohydrolase FolE2 (266 aa).

It belongs to the GTP cyclohydrolase IV family.

It carries out the reaction GTP + H2O = 7,8-dihydroneopterin 3'-triphosphate + formate + H(+). It participates in cofactor biosynthesis; 7,8-dihydroneopterin triphosphate biosynthesis; 7,8-dihydroneopterin triphosphate from GTP: step 1/1. Functionally, converts GTP to 7,8-dihydroneopterin triphosphate. In Burkholderia mallei (strain ATCC 23344), this protein is GTP cyclohydrolase FolE2.